Consider the following 224-residue polypeptide: UPF0758 protein SPO0054 (224 aa).

Residues 102–224 form the MPN domain; it reads VISSWDALLD…ELSFRAEGYL (123 aa). Zn(2+) is bound by residues histidine 173, histidine 175, and aspartate 186. A JAMM motif motif is present at residues 173–186; it reads HNHPSGDPTPSQSD.

The protein belongs to the UPF0758 family.

The chain is UPF0758 protein SPO0054 from Ruegeria pomeroyi (strain ATCC 700808 / DSM 15171 / DSS-3) (Silicibacter pomeroyi).